Consider the following 450-residue polypeptide: UDP-N-acetylmuramoylalanine--D-glutamate ligase (450 aa).

119–125 (GSNGKTT) lines the ATP pocket.

The protein belongs to the MurCDEF family.

The protein resides in the cytoplasm. The enzyme catalyses UDP-N-acetyl-alpha-D-muramoyl-L-alanine + D-glutamate + ATP = UDP-N-acetyl-alpha-D-muramoyl-L-alanyl-D-glutamate + ADP + phosphate + H(+). Its pathway is cell wall biogenesis; peptidoglycan biosynthesis. Cell wall formation. Catalyzes the addition of glutamate to the nucleotide precursor UDP-N-acetylmuramoyl-L-alanine (UMA). The chain is UDP-N-acetylmuramoylalanine--D-glutamate ligase from Bacillus mycoides (strain KBAB4) (Bacillus weihenstephanensis).